A 564-amino-acid polypeptide reads, in one-letter code: MFS-type transporter grgE (564 aa).

Residues 1-10 show a composition bias toward basic and acidic residues; the sequence is MAENQVDPKR. The disordered stretch occupies residues 1-52; it reads MAENQVDPKRNLPLYGAADESTSATDKEDEVENVRQNGSAPPIEEARESNEA. A glycan (N-linked (GlcNAc...) asparagine) is linked at Asn-37. A run of 7 helical transmembrane segments spans residues 60-80, 101-118, 131-151, 161-181, 192-212, 220-240, and 262-282; these read HGLS…IISL, KVSW…GFQT, TTFL…GVAP, AIAG…IAFS, GLVG…GGAF, WCFY…LIFF, and LVGV…LQYG. An N-linked (GlcNAc...) asparagine glycan is attached at Asn-289. The next 7 membrane-spanning stretches (helical) occupy residues 293-313, 329-349, 368-388, 392-412, 425-445, 462-482, and 531-551; these read VIGL…WEYY, ALWA…ILLY, VRNL…GAFV, GIAT…TGLI, IGYQ…PMNI, IFLA…SAFV, and TFAI…FTPW.

It belongs to the major facilitator superfamily.

Its subcellular location is the membrane. In terms of biological role, MFS-type transporter; part of the gene cluster that mediates the biosynthesis of gregatin A, a fungal polyketide featuring an alkylated furanone core. The polypeptide is MFS-type transporter grgE (Penicillium sp).